Consider the following 740-residue polypeptide: Ion-translocating oxidoreductase complex subunit C (740 aa).

2 consecutive 4Fe-4S ferredoxin-type domains span residues 369–397 (GEPQ…QQLY) and 407–436 (KATT…VQYF). [4Fe-4S] cluster contacts are provided by C377, C380, C383, C387, C416, C419, C422, and C426. Residues 602 to 714 (KLEQQQANAE…NAEPEEQIDP (113 aa)) form a disordered region. A compositionally biased stretch (low complexity) spans 605-615 (QQQANAEPEQQ).

Belongs to the 4Fe4S bacterial-type ferredoxin family. RnfC subfamily. In terms of assembly, the complex is composed of six subunits: RsxA, RsxB, RsxC, RsxD, RsxE and RsxG. [4Fe-4S] cluster is required as a cofactor.

The protein localises to the cell inner membrane. Part of a membrane-bound complex that couples electron transfer with translocation of ions across the membrane. Required to maintain the reduced state of SoxR. The chain is Ion-translocating oxidoreductase complex subunit C from Escherichia coli O17:K52:H18 (strain UMN026 / ExPEC).